A 100-amino-acid chain; its full sequence is Insertion element IS600 uncharacterized 11 kDa protein (100 aa).

The protein belongs to the transposase 8 family.

The protein is Insertion element IS600 uncharacterized 11 kDa protein of Shigella sonnei.